The primary structure comprises 122 residues: Small ribosomal subunit protein uS13 (122 aa).

The interval 99–122 (RGQRTHTNARTRKGPAKAIAGKKK) is disordered.

The protein belongs to the universal ribosomal protein uS13 family. Part of the 30S ribosomal subunit. Forms a loose heterodimer with protein S19. Forms two bridges to the 50S subunit in the 70S ribosome.

Located at the top of the head of the 30S subunit, it contacts several helices of the 16S rRNA. In the 70S ribosome it contacts the 23S rRNA (bridge B1a) and protein L5 of the 50S subunit (bridge B1b), connecting the 2 subunits; these bridges are implicated in subunit movement. Contacts the tRNAs in the A and P-sites. The polypeptide is Small ribosomal subunit protein uS13 (Rhodopseudomonas palustris (strain TIE-1)).